We begin with the raw amino-acid sequence, 200 residues long: 3-isopropylmalate dehydratase small subunit (200 aa).

It belongs to the LeuD family. LeuD type 1 subfamily. In terms of assembly, heterodimer of LeuC and LeuD.

The enzyme catalyses (2R,3S)-3-isopropylmalate = (2S)-2-isopropylmalate. Its pathway is amino-acid biosynthesis; L-leucine biosynthesis; L-leucine from 3-methyl-2-oxobutanoate: step 2/4. Catalyzes the isomerization between 2-isopropylmalate and 3-isopropylmalate, via the formation of 2-isopropylmaleate. The sequence is that of 3-isopropylmalate dehydratase small subunit from Aliivibrio fischeri (strain MJ11) (Vibrio fischeri).